The chain runs to 257 residues: Probable enoyl-CoA hydratase echA8 (257 aa).

It belongs to the enoyl-CoA hydratase/isomerase family.

The enzyme catalyses a (3S)-3-hydroxyacyl-CoA = a (2E)-enoyl-CoA + H2O. It catalyses the reaction a 4-saturated-(3S)-3-hydroxyacyl-CoA = a (3E)-enoyl-CoA + H2O. Functionally, could possibly oxidize fatty acids using specific components. This Mycobacterium leprae (strain TN) protein is Probable enoyl-CoA hydratase echA8 (echA8).